Consider the following 635-residue polypeptide: 5-aminolevulinate synthase, non-specific, mitochondrial (635 aa).

A mitochondrion-targeting transit peptide spans 1–56 (MEAVVRRCPFLARVSQAFLQKAGPSLLFYAQHCPKMMEAAPPAAARGLATSASRGQ). Positions 44 to 66 (AARGLATSASRGQQVEETPAAQP) are enriched in low complexity. The segment at 44 to 94 (AARGLATSASRGQQVEETPAAQPEAKKAKEVAQQNTDGSQPPAGHPPAAAV) is disordered. Arg-212, Ser-329, and Lys-348 together coordinate substrate. Residues Ser-381, His-409, and Thr-437 each contribute to the pyridoxal 5'-phosphate site. Lys-440 is an active-site residue. Lys-440 carries the N6-(pyridoxal phosphate)lysine modification. Positions 469 and 470 each coordinate pyridoxal 5'-phosphate. Substrate is bound at residue Thr-557.

This sequence belongs to the class-II pyridoxal-phosphate-dependent aminotransferase family. In terms of assembly, homodimer. It depends on pyridoxal 5'-phosphate as a cofactor. Ubiquitous.

The protein localises to the mitochondrion inner membrane. The catalysed reaction is succinyl-CoA + glycine + H(+) = 5-aminolevulinate + CO2 + CoA. It participates in porphyrin-containing compound metabolism; protoporphyrin-IX biosynthesis; 5-aminolevulinate from glycine: step 1/1. Its function is as follows. Catalyzes the pyridoxal 5'-phosphate (PLP)-dependent condensation of succinyl-CoA and glycine to form aminolevulinic acid (ALA), with CoA and CO2 as by-products. The chain is 5-aminolevulinate synthase, non-specific, mitochondrial (ALAS1) from Gallus gallus (Chicken).